Consider the following 373-residue polypeptide: Cobalt-precorrin-5B C(1)-methyltransferase (373 aa).

It belongs to the CbiD family.

It catalyses the reaction Co-precorrin-5B + S-adenosyl-L-methionine = Co-precorrin-6A + S-adenosyl-L-homocysteine. The protein operates within cofactor biosynthesis; adenosylcobalamin biosynthesis; cob(II)yrinate a,c-diamide from sirohydrochlorin (anaerobic route): step 6/10. Catalyzes the methylation of C-1 in cobalt-precorrin-5B to form cobalt-precorrin-6A. This Polaromonas sp. (strain JS666 / ATCC BAA-500) protein is Cobalt-precorrin-5B C(1)-methyltransferase.